The primary structure comprises 102 residues: Ribonuclease P protein component 1 (102 aa).

This sequence belongs to the eukaryotic/archaeal RNase P protein component 1 family. In terms of assembly, consists of a catalytic RNA component and at least 4-5 protein subunits.

The protein localises to the cytoplasm. It carries out the reaction Endonucleolytic cleavage of RNA, removing 5'-extranucleotides from tRNA precursor.. Its function is as follows. Part of ribonuclease P, a protein complex that generates mature tRNA molecules by cleaving their 5'-ends. The protein is Ribonuclease P protein component 1 of Archaeoglobus fulgidus (strain ATCC 49558 / DSM 4304 / JCM 9628 / NBRC 100126 / VC-16).